The sequence spans 347 residues: Palmitoyltransferase ZDHHC11 (347 aa).

Topologically, residues 1 to 46 (MKEMNICGINKNWVLPEAQENNVKKFLPRPLSRVNGWSPPLHSFQA) are cytoplasmic. The helical transmembrane segment at 47–67 (ISWITYLAMSIVTFGIFIPFL) threads the bilayer. The Lumenal portion of the chain corresponds to 68 to 75 (PYSWKYAA). Residues 76–96 (NIVMGGVFIFHLIVHLIAITI) traverse the membrane as a helical segment. The Cytoplasmic portion of the chain corresponds to 97 to 170 (DPADTNVRLK…LNNCVGRRNY (74 aa)). Positions 128 to 178 (QYCHLCEVTASKKAKHCSACNKCVSGFDHHCKWLNNCVGRRNYWFFFWSVA) constitute a DHHC domain. Cysteine 158 functions as the S-palmitoyl cysteine intermediate in the catalytic mechanism. The helical transmembrane segment at 171–191 (WFFFWSVASAAVGILGVMIIL) threads the bilayer. Residues 192–234 (CYICIQYFVNPDELRTDPLYKEIISENTWLLFLSLWPVPVKTP) lie on the Lumenal side of the membrane. A helical transmembrane segment spans residues 235–255 (IVLSIAVMALLLAIASFVMLG). Topologically, residues 256–347 (HLLIFHLYLI…SPPKICHSED (92 aa)) are cytoplasmic. The span at 291-306 (ELPLQKKGDLPQEKSD) shows a compositional bias: basic and acidic residues. The disordered stretch occupies residues 291 to 332 (ELPLQKKGDLPQEKSDNWAWPKSPPRVGSQKFPVSTLSPKSS). Positions 322-331 (FPVSTLSPKS) are enriched in polar residues.

The protein belongs to the DHHC palmitoyltransferase family. In terms of assembly, interacts with IRF3 and STING1; in presence of DNA viruses recruits IRF3 to STING1 promoting IRF3 phosphorylation and activation.

The protein localises to the endosome membrane. The enzyme catalyses L-cysteinyl-[protein] + hexadecanoyl-CoA = S-hexadecanoyl-L-cysteinyl-[protein] + CoA. Functionally, endoplasmic reticulum-localized palmitoyltransferase that could catalyze the addition of palmitate onto various protein substrates and be involved in a variety of cellular processes. Has a palmitoyltransferase activity toward NCDN and regulates NCDN association with endosome membranes through this palmitoylation. May play a role in cell proliferation. Also has a palmitoyltransferase activity-independent function in DNA virus-triggered and CGAS-mediated innate immune response. Functions as an adapter that recruits IRF3 to STING1 to promote the activation of that key transcriptional regulator of type I interferon (IFN)-dependent immune response. The polypeptide is Palmitoyltransferase ZDHHC11 (Mus musculus (Mouse)).